Consider the following 899-residue polypeptide: Receptor-like protein kinase At3g21340 (899 aa).

The signal sequence occupies residues 1–27 (MEYHPQAIRLCALIFISFYALLHLVEA). The Extracellular segment spans residues 28–522 (QDQKGFISLD…GAKKMNVVIP (495 aa)). N-linked (GlcNAc...) asparagine glycosylation is found at Asn-100, Asn-146, Asn-185, Asn-240, Asn-266, Asn-420, Asn-436, Asn-449, Asn-468, and Asn-475. LRR repeat units lie at residues 415–438 (IVTS…QNLT), 439–461 (HLQE…LADI), and 463–485 (SLLV…LLQK). The chain crosses the membrane as a helical span at residues 523–543 (IVASVAFVVVLGSALAFFFIF). At 544–899 (KKKKTSNSQD…FDIGATPDAR (356 aa)) the chain is on the cytoplasmic side. A Phosphothreonine modification is found at Thr-583. Positions 592-865 (NNFERVLGKG…QVVIELNECL (274 aa)) constitute a Protein kinase domain. Residues 598–606 (LGKGGFGMV) and Lys-620 each bind ATP. Tyr-665 carries the post-translational modification Phosphotyrosine. Asp-717 serves as the catalytic Proton acceptor. Ser-751 carries the phosphoserine modification. 2 positions are modified to phosphothreonine: Thr-752 and Thr-757. Position 765 is a phosphotyrosine (Tyr-765).

It belongs to the protein kinase superfamily. Ser/Thr protein kinase family. In terms of processing, autophosphorylated on Tyr and Thr residues.

The protein localises to the cell membrane. The catalysed reaction is L-seryl-[protein] + ATP = O-phospho-L-seryl-[protein] + ADP + H(+). It catalyses the reaction L-threonyl-[protein] + ATP = O-phospho-L-threonyl-[protein] + ADP + H(+). The enzyme catalyses L-tyrosyl-[protein] + ATP = O-phospho-L-tyrosyl-[protein] + ADP + H(+). Probable receptor with a dual specificity kinase activity acting on both serine/threonine- and tyrosine-containing substrates. The sequence is that of Receptor-like protein kinase At3g21340 from Arabidopsis thaliana (Mouse-ear cress).